The following is a 468-amino-acid chain: Transmembrane protein 151B (468 aa).

Residues 1-25 form a disordered region; it reads MPEDGGGDSGDVPEIIPDGEPLREE. Transmembrane regions (helical) follow at residues 45 to 65 and 98 to 118; these read CLLL…CRLA and YLYI…AECW. The segment at 384 to 438 is disordered; that stretch reads VSSNSLPPARPSGPRLPFSRSRLSLGAGGRATPGVFRSLSGGPLGRRGEDTEPLE.

This sequence belongs to the TMEM151 family.

The protein localises to the membrane. The sequence is that of Transmembrane protein 151B (TMEM151B) from Bos taurus (Bovine).